A 494-amino-acid polypeptide reads, in one-letter code: Fumigaclavine B O-acetyltransferase easN (494 aa).

The protein belongs to the fumigaclavine B O-acetyltransferase family. In terms of assembly, monomer.

The catalysed reaction is fumigaclavine B + acetyl-CoA = fumigaclavine A + CoA. It participates in alkaloid biosynthesis; ergot alkaloid biosynthesis. Its function is as follows. Fumigaclavine B O-acetyltransferase; part of the gene cluster that mediates the biosynthesis of fumiclavanine C, a fungal ergot alkaloid. DmaW catalyzes the first step of ergot alkaloid biosynthesis by condensing dimethylallyl diphosphate (DMAP) and tryptophan to form 4-dimethylallyl-L-tryptophan. The second step is catalyzed by the methyltransferase easF that methylates 4-dimethylallyl-L-tryptophan in the presence of S-adenosyl-L-methionine, resulting in the formation of 4-dimethylallyl-L-abrine. The catalase easC and the FAD-dependent oxidoreductase easE then transform 4-dimethylallyl-L-abrine to chanoclavine-I which is further oxidized by EasD in the presence of NAD(+), resulting in the formation of chanoclavine-I aldehyde. EasA reduces chanoclavine-I aldehyde to dihydrochanoclavine-I aldehyde that spontaneously dehydrates to form 6,8-dimethyl-6,7-didehydroergoline. EasG then catalyzes the reduction of 6,8-dimethyl-6,7-didehydroergoline to form festuclavine. Hydrolysis of festuclavine by easM then leads to the formation of fumigaclavine B which is in turn acetylated by easN to fumigaclavine A. Finally, easL catalyzes the conversion of fumigaclavine A into fumigaclavine C by attaching a dimethylallyl moiety to C-2 of the indole nucleus. In Aspergillus fumigatus (strain ATCC MYA-4609 / CBS 101355 / FGSC A1100 / Af293) (Neosartorya fumigata), this protein is Fumigaclavine B O-acetyltransferase easN.